A 966-amino-acid polypeptide reads, in one-letter code: Insulin-degrading enzyme-like 2 (966 aa).

Histidine 71 is a binding site for Zn(2+). The Proton acceptor role is filled by glutamate 74. Histidine 75 contributes to the Zn(2+) binding site. Glutamate 145 is an active-site residue. A Zn(2+)-binding site is contributed by glutamate 152.

It belongs to the peptidase M16 family. It depends on Zn(2+) as a cofactor.

This chain is Insulin-degrading enzyme-like 2, found in Arabidopsis thaliana (Mouse-ear cress).